The following is a 406-amino-acid chain: MSNKKKQLTVMGTVWDFWSVLKMFDKLYESKYISFYEPWLKGEIDKEKIILFNEKSKNPLLWPFKILKRTYKILKIIREFKPDLVITHHDDANVSIIPVILLNKIFKISNNTKFILWVRNNPIESYKEGLYSKIIILAYKYFYKYADIIIVQTQENKKIIESHFKSLKNKTKIVPNVYEIDKLQQLSNEPLEKQYRNIFKDSFVFINIGRLTEQKGQWFLIRSFKRVTEKYPNAKLIILGDGELKNKLQELINKLNLQNNVYLLGMQKNPFKFLKHSNCFVFSSLWEGLPNTVIEALSLNLPVISTDCKTGPREILCPELNISDKIDYPYYGKYGILTKPFSREFIWQDLNEKPLIEEEKMLADLMIKMIEDEDLRKRYSNGLERAKDFDIEKIIKEWKLLIEGTI.

It belongs to the glycosyltransferase group 1 family. Glycosyltransferase 4 subfamily.

This is an uncharacterized protein from Methanocaldococcus jannaschii (strain ATCC 43067 / DSM 2661 / JAL-1 / JCM 10045 / NBRC 100440) (Methanococcus jannaschii).